The sequence spans 213 residues: ATP phosphoribosyltransferase (213 aa).

Belongs to the ATP phosphoribosyltransferase family. Short subfamily. In terms of assembly, heteromultimer composed of HisG and HisZ subunits.

It is found in the cytoplasm. The enzyme catalyses 1-(5-phospho-beta-D-ribosyl)-ATP + diphosphate = 5-phospho-alpha-D-ribose 1-diphosphate + ATP. It participates in amino-acid biosynthesis; L-histidine biosynthesis; L-histidine from 5-phospho-alpha-D-ribose 1-diphosphate: step 1/9. Functionally, catalyzes the condensation of ATP and 5-phosphoribose 1-diphosphate to form N'-(5'-phosphoribosyl)-ATP (PR-ATP). Has a crucial role in the pathway because the rate of histidine biosynthesis seems to be controlled primarily by regulation of HisG enzymatic activity. This is ATP phosphoribosyltransferase from Variovorax paradoxus (strain S110).